We begin with the raw amino-acid sequence, 141 residues long: uncharacterized protein (141 aa).

The next 3 helical transmembrane spans lie at 32-52 (LIVLIFSILIAISAYISTSII), 69-89 (IIALISTFIGGIVAWLIIAGF), and 109-129 (FTGYGFLPNIVGALITIPIAY).

It localises to the cell membrane. This is an uncharacterized protein from Methanocaldococcus jannaschii (strain ATCC 43067 / DSM 2661 / JAL-1 / JCM 10045 / NBRC 100440) (Methanococcus jannaschii).